A 341-amino-acid chain; its full sequence is Phenylalanine--tRNA ligase alpha subunit (341 aa).

Glutamate 256 provides a ligand contact to Mg(2+).

It belongs to the class-II aminoacyl-tRNA synthetase family. Phe-tRNA synthetase alpha subunit type 1 subfamily. Tetramer of two alpha and two beta subunits. Mg(2+) serves as cofactor.

The protein localises to the cytoplasm. The enzyme catalyses tRNA(Phe) + L-phenylalanine + ATP = L-phenylalanyl-tRNA(Phe) + AMP + diphosphate + H(+). The protein is Phenylalanine--tRNA ligase alpha subunit (pheS) of Chlamydia muridarum (strain MoPn / Nigg).